The chain runs to 745 residues: Aminopeptidase NAALADL1 (745 aa).

The Cytoplasmic portion of the chain corresponds to 1 to 6; the sequence is MHWVKI. A helical; Signal-anchor for type II membrane protein transmembrane segment spans residues 7–28; it reads LGVALGAAALLGLGIILGHFAI. The Extracellular segment spans residues 29–745; the sequence is PKATSPLTSS…AATLVPVADL (717 aa). Residues N128, N141, and N235 are each glycosylated (N-linked (GlcNAc...) asparagine). 2 residues coordinate Ca(2+): T263 and L266. N279, N302, and N329 each carry an N-linked (GlcNAc...) asparagine glycan. An intrachain disulfide couples C301 to C318. Zn(2+)-binding residues include H373 and D383. Residue E421 is the Proton donor/acceptor of the active site. E422 serves as a coordination point for Zn(2+). Residues E430 and E433 each coordinate Ca(2+). D450 serves as a coordination point for Zn(2+). N456 and N497 each carry an N-linked (GlcNAc...) asparagine glycan. H550 provides a ligand contact to Zn(2+). N593 and N620 each carry an N-linked (GlcNAc...) asparagine glycan.

Belongs to the peptidase M28 family. M28B subfamily. As to quaternary structure, homodimer. Zn(2+) is required as a cofactor. In terms of processing, N-glycosylated.

The protein localises to the apical cell membrane. Functionally, aminopeptidase with broad substrate specificity. Has lower activity with substrates that have Asp or Glu in the P2' position, or Pro in the P3' position. Lacks activity with substrates that have both Pro in the P3' position and Asp or Glu in the P2' position. Lacks carboxypeptidase activity. Lacks dipeptidyl-peptidase IV type activity. In Mus musculus (Mouse), this protein is Aminopeptidase NAALADL1 (Naaladl1).